The primary structure comprises 146 residues: MNPAHLLILAAVCVSPLGASSNRPMPLNLYQFKNMVQCTVPNRSWWHFADYGCYCGRGGSGTPVDDLDRCCQIHDNCYNEAEKISRCWPYFKTYSYECSQGTLTCKGGNNACAAAVCDCDRLAAICFAGAPYNDNNYNIDLKARCQ.

A signal peptide spans 1–21 (MNPAHLLILAAVCVSPLGASS). Residues 22–27 (NRPMPL) constitute a propeptide that is removed on maturation. 7 cysteine pairs are disulfide-bonded: Cys38–Cys98, Cys53–Cys145, Cys55–Cys71, Cys70–Cys126, Cys77–Cys119, Cys87–Cys112, and Cys105–Cys117. Tyr54, Gly56, and Gly58 together coordinate Ca(2+). His74 is a catalytic residue. Asp75 contributes to the Ca(2+) binding site. Residue Asp120 is part of the active site.

This sequence belongs to the phospholipase A2 family. Group I subfamily. D49 sub-subfamily. Ca(2+) is required as a cofactor. As to expression, expressed by the venom gland.

Its subcellular location is the secreted. It carries out the reaction a 1,2-diacyl-sn-glycero-3-phosphocholine + H2O = a 1-acyl-sn-glycero-3-phosphocholine + a fatty acid + H(+). PLA2 catalyzes the calcium-dependent hydrolysis of the 2-acyl groups in 3-sn-phosphoglycerides. This Naja sputatrix (Malayan spitting cobra) protein is Neutral phospholipase A2 B.